Reading from the N-terminus, the 2587-residue chain is Clavatol synthase claF (2587 aa).

Residues 93–256 are N-terminal acylcarrier protein transacylase domain (SAT); it reads LLSPLVVIVQ…TEVALSGRFH (164 aa). The active-site Nucleophile; for transacylase activity is the cysteine 137. Histidine 256 functions as the Proton donor/acceptor; for transacylase activity in the catalytic mechanism. Residues 383 to 799 enclose the Ketosynthase family 3 (KS3) domain; it reads DDQIAVIGMA…GSNASMIITQ (417 aa). Catalysis depends on for beta-ketoacyl synthase activity residues cysteine 548, histidine 683, and histidine 722. Positions 912–1222 are malonyl-CoA:ACP transacylase (MAT) domain; the sequence is CFGGQISTYV…ESLPLLAEAT (311 aa). The segment at 1284–1416 is N-terminal hotdog fold; that stretch reads PKGLTTFIGF…GSIVFLPASD (133 aa). A PKS/mFAS DH domain is found at 1284–1595; sequence PKGLTTFIGF…YRLVPMDSMR (312 aa). The interval 1315-1593 is product template (PT) domain; sequence LTSANVALNT…ISYRLVPMDS (279 aa). The segment at 1436–1595 is C-terminal hotdog fold; that stretch reads ASLLQGNGAD…YRLVPMDSMR (160 aa). Residues 1609–1635 are disordered; it reads STAAVSSKSTPVHAPTPTTTVSSTPSS. The segment covering 1617–1635 has biased composition (low complexity); that stretch reads STPVHAPTPTTTVSSTPSS. The Carrier domain maps to 1654 to 1728; that stretch reads PDISAKMCEI…SLVSCIRSTL (75 aa). Serine 1688 bears the O-(pantetheine 4'-phosphoryl)serine mark. Catalysis depends on for methyltransferase activity residues tyrosine 1947, histidine 2059, and glutamate 2085. The methyltransferase (CMeT) domain stretch occupies residues 1952 to 2126; the sequence is VNTVWIKQLE…ATYWEKVLQS (175 aa). An NADPH-binding (R) domain region spans residues 2208 to 2452; the sequence is SLSSGQCVLV…KILPELDGTL (245 aa).

The cofactor is pantetheine 4'-phosphate.

It catalyses the reaction 3 malonyl-CoA + acetyl-CoA + AH2 + 2 S-adenosyl-L-methionine + H(+) = clavatol + A + 2 S-adenosyl-L-homocysteine + 3 CO2 + 4 CoA + H2O. It participates in secondary metabolite biosynthesis. In terms of biological role, non-reducing polyketide synthase; part of the cla gene cluster that produces clavatol and ortho-quinone methide. The clavatol biosynthesis cluster cla and the terrestric acid cluster tra are both involved in the production of peniphenones and penilactones. The non-reducing PKS claF is responsible for the formation of clavatol from successive condensations of 3 malonyl-CoA units, presumably with a simple acetyl-CoA starter unit, and 2 methylation steps. The esterase claE probably collaborates with claF by catalyzing the hydrolysis of ACP-bound acyl intermediates to free the ACP from stalled intermediates. The clavatol oxidase claD then converts clavatol to hydroxyclavatol. Spontaneous dehydration of hydroxyclavatol leads to the accumulation of the highly active ortho-quinone methide. On the other hand, the PKS-NRPS hybrid traA is involved in the formation of crustosic acid, with the help of traB and traD. The polyketide synthase module (PKS) of traA is responsible for the synthesis of the polyketide backbone via the condensation of an acetyl-CoA starter unit with 3 malonyl-CoA units. The downstream nonribosomal peptide synthetase (NRPS) module then amidates the carboxyl end of the polyketide with L-malic acid. Because traA lacks a designated enoylreductase (ER) domain, the required activity is provided the enoyl reductase traG. Crustosic acid undergoes decarboxylation and isomerization to the terrestric acid, catalyzed by the 2-oxoglutarate-dependent dioxygenase traH. Both acids are further converted to the 2 gamma-butyrolactones (R)-5-methyltetronic acid and (S)-5-carboxylmethyltetronic acid, with involvement of the cytochrome P450 monooxygenase claJ. Spontaneous addition of the methide to these gamma-butyrolactones leads to peniphenone D and penilactone D, which undergo again stereospecific attacking by methide to give penilactones A and B. This chain is Clavatol synthase claF, found in Penicillium crustosum (Blue mold fungus).